A 292-amino-acid polypeptide reads, in one-letter code: ATP synthase gamma chain (292 aa).

Belongs to the ATPase gamma chain family. F-type ATPases have 2 components, CF(1) - the catalytic core - and CF(0) - the membrane proton channel. CF(1) has five subunits: alpha(3), beta(3), gamma(1), delta(1), epsilon(1). CF(0) has three main subunits: a, b and c.

Its subcellular location is the cell inner membrane. Functionally, produces ATP from ADP in the presence of a proton gradient across the membrane. The gamma chain is believed to be important in regulating ATPase activity and the flow of protons through the CF(0) complex. The protein is ATP synthase gamma chain of Brucella anthropi (strain ATCC 49188 / DSM 6882 / CCUG 24695 / JCM 21032 / LMG 3331 / NBRC 15819 / NCTC 12168 / Alc 37) (Ochrobactrum anthropi).